A 166-amino-acid chain; its full sequence is Large ribosomal subunit protein uL10 (166 aa).

This sequence belongs to the universal ribosomal protein uL10 family. Part of the ribosomal stalk of the 50S ribosomal subunit. The N-terminus interacts with L11 and the large rRNA to form the base of the stalk. The C-terminus forms an elongated spine to which L12 dimers bind in a sequential fashion forming a multimeric L10(L12)X complex.

Functionally, forms part of the ribosomal stalk, playing a central role in the interaction of the ribosome with GTP-bound translation factors. This chain is Large ribosomal subunit protein uL10, found in Pseudomonas entomophila (strain L48).